Here is a 284-residue protein sequence, read N- to C-terminus: Polyamine aminopropyltransferase (284 aa).

Residues 2–237 (ELWYTEQHTE…GHWLFGFASK (236 aa)) enclose the PABS domain. Gln-31 contacts S-methyl-5'-thioadenosine. Residues His-62 and Asp-86 each contribute to the spermidine site. S-methyl-5'-thioadenosine contacts are provided by residues Glu-106 and 137–138 (DG). Residue Asp-155 is the Proton acceptor of the active site. Spermidine is bound at residue 155–158 (DSTD). An S-methyl-5'-thioadenosine-binding site is contributed by Pro-162.

Belongs to the spermidine/spermine synthase family. In terms of assembly, homodimer or homotetramer.

It localises to the cytoplasm. The catalysed reaction is S-adenosyl 3-(methylsulfanyl)propylamine + putrescine = S-methyl-5'-thioadenosine + spermidine + H(+). It functions in the pathway amine and polyamine biosynthesis; spermidine biosynthesis; spermidine from putrescine: step 1/1. Catalyzes the irreversible transfer of a propylamine group from the amino donor S-adenosylmethioninamine (decarboxy-AdoMet) to putrescine (1,4-diaminobutane) to yield spermidine. The polypeptide is Polyamine aminopropyltransferase (Clostridium beijerinckii (strain ATCC 51743 / NCIMB 8052) (Clostridium acetobutylicum)).